Reading from the N-terminus, the 960-residue chain is Testis anion transporter 1 (960 aa).

Residues 1-93 lie on the Cytoplasmic side of the membrane; that stretch reads MQPDRSFQSF…YRFKDWLLGD (93 aa). Residues 94–114 form a helical membrane-spanning segment; it reads LLAGISVGLVQIPQVLMLGLL. Residues 115 to 117 lie on the Extracellular side of the membrane; it reads ARH. The helical transmembrane segment at 118–138 threads the bilayer; that stretch reads LIPPLNVSYAAFCASVIYGIF. Position 139 (G139) is a topological domain, cytoplasmic. The chain crosses the membrane as a helical span at residues 140 to 160; that stretch reads SCHQMSIGTFFLVSALAINVL. At 161–201 the chain is on the extracellular side; that stretch reads RTQPFNRGHLLLGTFIQADFSNTSFYENYNRSLSSVASVTL. N-linked (GlcNAc...) asparagine glycosylation occurs at N190. Transmembrane regions (helical) follow at residues 202 to 222 and 223 to 243; these read LTGI…VAYI and PEAA…LSQL. Topologically, residues 244 to 268 are cytoplasmic; the sequence is TCIFGIMISYNSGPIAFFYNIINYC. A helical membrane pass occupies residues 269–289; it reads LGLPKANSTSILLFLTAMVAL. The Extracellular portion of the chain corresponds to 290 to 353; the sequence is RINKCIRISF…PVTPDMSNLT (64 aa). Residues 354-374 form a helical membrane-spanning segment; that stretch reads EVLIESFSLALVSSSLLVFLG. Residues 375 to 390 lie on the Cytoplasmic side of the membrane; the sequence is KKIASFHNYDVNSNQD. Residues 391–411 form a helical membrane-spanning segment; sequence LIAIGLCNVVSSFFRSYVFTG. Residues 412–427 are Extracellular-facing; that stretch reads AVARTIIQDKTGGRQQ. The chain crosses the membrane as a helical span at residues 428–448; that stretch reads FASLVGAGIMLLLMMKMARFF. The Cytoplasmic portion of the chain corresponds to 449 to 453; the sequence is YRLPN. A helical membrane pass occupies residues 454–474; it reads AIVAGIILSNVLPYLEAVYTL. Over 475–494 the chain is Extracellular; the sequence is PSLWRQNQYDCLIWMVTFMS. A helical transmembrane segment spans residues 495 to 515; sequence AILLGLDIGLVVAVTFAFFII. Residues 516 to 960 lie on the Cytoplasmic side of the membrane; it reads TVQSHRTKIL…ADTSEDALEI (445 aa). Positions 541–792 constitute an STAS domain; the sequence is DYREVANIPG…LTLHDAVLFA (252 aa). An interaction with RACGAP1 region spans residues 662 to 957; it reads ITSSSSQRNP…TSKADTSEDA (296 aa). Disordered regions lie at residues 807–857 and 881–960; these read ESET…EESD and EVEP…ALEI. A compositionally biased stretch (basic and acidic residues) spans 818–827; that stretch reads ETDKKEESRH. The span at 884–904 shows a compositional bias: acidic residues; that stretch reads PESELEPESELDQETELEPEP. Residues 926–935 are compositionally biased toward polar residues; the sequence is SPTQTQARTQ.

This sequence belongs to the SLC26A/SulP transporter (TC 2.A.53) family. Interacts with RACGAP1. Interacts with CFTR; stimulates anion transport activity of CFTR. In terms of processing, N-glycosylated.

The protein resides in the membrane. It carries out the reaction sulfate(out) + chloride(in) = sulfate(in) + chloride(out). The enzyme catalyses oxalate(in) + chloride(out) = oxalate(out) + chloride(in). Antiporter that mediates the exchange of sulfate and oxalate against chloride ions across a membrane. Stimulates anion transport activity of CFTR. May cooperate with CFTR in the regulation of chloride and bicarbonate ions fluxes required for activation of the ADCY10/PKA pathway during sperm motility and sperm capacitation. May play a role in sperm tail differentiation and motility and hence male fertility. This is Testis anion transporter 1 from Bos taurus (Bovine).